Reading from the N-terminus, the 559-residue chain is Glutamine--tRNA ligase (559 aa).

The 'HIGH' region motif lies at 36-46; sequence PEPNGYLHLGH. Residues 37-39 and 43-49 each bind ATP; these read EPN and HLGHAKS. The L-glutamine site is built by Asp-69 and Tyr-214. ATP-binding positions include Thr-233, 263-264, and 271-273; these read RL and LSK. The 'KMSKS' region motif lies at 270–274; that stretch reads LLSKR.

It belongs to the class-I aminoacyl-tRNA synthetase family. Monomer.

Its subcellular location is the cytoplasm. It carries out the reaction tRNA(Gln) + L-glutamine + ATP = L-glutaminyl-tRNA(Gln) + AMP + diphosphate. This chain is Glutamine--tRNA ligase, found in Nitrobacter winogradskyi (strain ATCC 25391 / DSM 10237 / CIP 104748 / NCIMB 11846 / Nb-255).